Here is a 182-residue protein sequence, read N- to C-terminus: Ribosome-recycling factor (182 aa).

The protein belongs to the RRF family.

It is found in the cytoplasm. Functionally, responsible for the release of ribosomes from messenger RNA at the termination of protein biosynthesis. May increase the efficiency of translation by recycling ribosomes from one round of translation to another. The protein is Ribosome-recycling factor of Gloeobacter violaceus (strain ATCC 29082 / PCC 7421).